A 340-amino-acid polypeptide reads, in one-letter code: Methane monooxygenase component C (340 aa).

In terms of domain architecture, 2Fe-2S ferredoxin-type spans 1–92; that stretch reads MYQIVIETED…DLHLLVPYTY (92 aa). Residues Cys-37, Cys-41, Cys-44, and Cys-76 each coordinate [2Fe-2S] cluster. Positions 101-205 constitute an FAD-binding FR-type domain; the sequence is QTNWLAEILA…RGPAGSFFLH (105 aa). Residue 215-229 participates in FAD binding; sequence VAGGTGLSPVLSMIR.

As to quaternary structure, the soluble methane monooxygenase (sMMO) consists of four components A/MMOH (composed of alpha/MmoX, beta/MmoY and gamma/MmoZ), B/MMOB (MmoB), C/MMOR (MmoC) and D/MMOD (MmoD). The cofactor is [2Fe-2S] cluster.

The catalysed reaction is methane + NADH + O2 + H(+) = methanol + NAD(+) + H2O. The enzyme catalyses methane + NADPH + O2 + H(+) = methanol + NADP(+) + H2O. Functionally, responsible for the initial oxygenation of methane to methanol in methanotrophs. It also catalyzes the monohydroxylation of a variety of unactivated alkenes, alicyclic, aromatic and heterocyclic compounds. The component C is the iron-sulfur flavoprotein of sMMO. This is Methane monooxygenase component C (mmoC) from Methylosinus trichosporium.